Reading from the N-terminus, the 1190-residue chain is MEEVCEGKEFSFPRQEEDVLSFWTEIDAFKTQLKRTENLPEYIFYDGPPFATGLPHYGHILAGTIKDIVTRYQTMTGHHVTRRFGWDCHGLPVENEIDRKLNIKRRDEVIKMGIDKYNEECRSIVTRYVAEWEKVITRCGRWIDFKNDYKTMDLPFMESVWWVFSQLWEKNLVYRGFKVMPYSTGCKTPLSNFEAGQNYKEVPDPEIMVTFPVIGDQDNAAFVAWTTTPWTLPSNLALCVNAKFVYVKVRNKNTGKVYIVAESRLSALPTDKPKAKLSNGPAGDTKKANPKAKGAKPESAADSYEVLEKFNGASLVGKKYEPLFDYFSDFSSEAFRVVADDYVTDDSGTGIVHCAPAFGEDDYRVCLLNKIIKKGENLVVAVDDDGLFTERITHFSGRYVKDADKDIIEAVKAKGRLVKTGSFTHSYPFCWRSDTPLIYRAVPSWFVRVEQLKEKLLKSNEQTEWVPGYVKDKRFHNWLENARDWAISRSRFWGTPLPIWISDDGEEVVIMDSVEKLEKLSGVKVFDLHRHHIDHITIPSSRGDEFGVLRRVEDVFDCWFESGSMPYAYIHYPFENKELFEKNFPGDFVAEGLDQTRGWFYTLMVLSTALFEKPAFKNLICNGLVLAEDGKKMAKKLRNYPPPLEVIDEYGADAVRLYLINSPVVRAEPLRFKKEGVLGVVKDVFLPWYNAYRFLVQNAKRLETEGGVPFVPTDLATIQSANILDQWIHSATQSLVRFVREEMDAYRLYTVVPRLLKFLDNLTNIYVRFNRKRLKGRTGEDDCHTALSTLFNVLLTSCKVMAPFTPFFTETLYQNLRKACKGSEESVHYCSIPPREGMEGERIELSVTRMMKIIDLARNIRERNKLPLKTPLKEMIVVHPDADFLNDITGVLREYVLEELNVRSLVPCNDTLKYASLKAEPDFSVLGKRLGKSMGLVAKEVKEMSQKDILAFEEAGEVTIANHLLKETDIKIVRVFKRPDDLKENEIDSAGDGDVLVILDLRADDSLVEAGFAREIVNRIQKLRKKSGLEPTDFVEVYFQSLDEDESVSKQVLVSQEQNIKDSIGSTLLLSSLMPSHAVIIADETFTPKETSDESVKKVPKLSYKISLARPALKFNEEAVLALYSGDVKSATGLQTYLLSRDHSNLKSEFQAGDGKITVSCIENVPVATVVLGEHLHLSVGDDLLSKRNA.

The 'HIGH' region signature appears at P49–H59. A disordered region spans residues D271–S299. The 'KMSKS' region signature appears at K632–K636. K635 is a binding site for ATP.

This sequence belongs to the class-I aminoacyl-tRNA synthetase family.

Its subcellular location is the cytoplasm. It localises to the cytosol. The catalysed reaction is tRNA(Ile) + L-isoleucine + ATP = L-isoleucyl-tRNA(Ile) + AMP + diphosphate. The polypeptide is Isoleucine--tRNA ligase, cytoplasmic (Arabidopsis thaliana (Mouse-ear cress)).